Here is a 389-residue protein sequence, read N- to C-terminus: MDLFEYQAKELFAKHNVPTTPGRVTTTAEDAKAIAEEIGKPVMIKAQVKVGGRGKAGGVKYAATPDDALTHAQNILGLDIKGHIVKKILVAEASDIAEEYYISFLLDRANRTYLAMCSVEGGVEIEVTAEENPDALAKVPVDAVKGVDLALAREIAEKGKLPAEVLDSAAVTIQKLWEVFVGEDATLVEVNPLVRTPDNQILALDGKVTLDGNADFRQPGHAEFEDKDATDPLELKAKEHDLNYVKLDGQVGIIGNGAGLVMSTLDVVAYAGENHNGVKPANFLDIGGGASAEVMAAGLDVILGDSQVKSVFVNVFGGITACDAVANGIVGALKTLGNTASKPLVVRLDGNKVEEGRAILAEFNHPLVIQAETMDAGADKAAALAAASN.

Residues 9 to 236 (KELFAKHNVP…KDATDPLELK (228 aa)) enclose the ATP-grasp domain. ATP contacts are provided by residues Lys-45, 52–54 (GRG), Ser-94, and Glu-99. Positions 191 and 205 each coordinate Mg(2+). Residues Asn-256 and 318–320 (GIT) each bind substrate.

The protein belongs to the succinate/malate CoA ligase beta subunit family. In terms of assembly, heterotetramer of two alpha and two beta subunits. Requires Mg(2+) as cofactor.

It catalyses the reaction succinate + ATP + CoA = succinyl-CoA + ADP + phosphate. The catalysed reaction is GTP + succinate + CoA = succinyl-CoA + GDP + phosphate. The protein operates within carbohydrate metabolism; tricarboxylic acid cycle; succinate from succinyl-CoA (ligase route): step 1/1. Functionally, succinyl-CoA synthetase functions in the citric acid cycle (TCA), coupling the hydrolysis of succinyl-CoA to the synthesis of either ATP or GTP and thus represents the only step of substrate-level phosphorylation in the TCA. The beta subunit provides nucleotide specificity of the enzyme and binds the substrate succinate, while the binding sites for coenzyme A and phosphate are found in the alpha subunit. The protein is Succinate--CoA ligase [ADP-forming] subunit beta of Mycobacteroides abscessus (strain ATCC 19977 / DSM 44196 / CCUG 20993 / CIP 104536 / JCM 13569 / NCTC 13031 / TMC 1543 / L948) (Mycobacterium abscessus).